Here is a 202-residue protein sequence, read N- to C-terminus: Transmembrane 4 L6 family member 1 (202 aa).

Topologically, residues 1-9 are cytoplasmic; that stretch reads MCSSKCTRY. A helical transmembrane segment spans residues 10–30; that stretch reads IGHSLVVFAVLCIVANILLYF. At 31 to 49 the chain is on the extracellular side; that stretch reads PNGETKYAYEDHLSRFVWF. Residues 50–70 form a helical membrane-spanning segment; it reads FAGIVGGGLLILLPAFVFLGL. Residues 71 to 93 are Cytoplasmic-facing; that stretch reads EGEDCCGCWSCENYGKRCTMLSS. A helical transmembrane segment spans residues 94 to 114; it reads IMAALIGIAGSGYCVIVAALG. Residues 115 to 161 are Extracellular-facing; sequence LAEGPKCGDSHGMWNYTFANTDGQYLLDPTTWSKCHEPNNIVEWNVT. N129 and N159 each carry an N-linked (GlcNAc...) asparagine glycan. A helical transmembrane segment spans residues 162 to 182; that stretch reads LFSILLALGGLEFILCLIQVI. Residues 183–202 are Cytoplasmic-facing; that stretch reads NGVLEGMCSYCCSHQQQYDC.

It belongs to the L6 tetraspanin family. As to quaternary structure, present in high molecular weight complexes in tumor cells. Interacts with SDCBP2.

The protein resides in the membrane. This chain is Transmembrane 4 L6 family member 1 (TM4SF1), found in Mesocricetus auratus (Golden hamster).